A 491-amino-acid chain; its full sequence is Trypanothione reductase (491 aa).

35–51 (DLQKHHGPPHYAALGGT) provides a ligand contact to FAD. Cys52 and Cys57 are oxidised to a cystine. His461 functions as the Proton acceptor in the catalytic mechanism.

Belongs to the class-I pyridine nucleotide-disulfide oxidoreductase family. In terms of assembly, homodimer. Requires FAD as cofactor. In terms of processing, the N-terminus is blocked.

It localises to the cytoplasm. The catalysed reaction is trypanothione + NADP(+) = trypanothione disulfide + NADPH + H(+). Its function is as follows. Trypanothione is the parasite analog of glutathione; this enzyme is the equivalent of glutathione reductase. The sequence is that of Trypanothione reductase (TPR) from Crithidia fasciculata.